The primary structure comprises 551 residues: RanBD1 domain-containing protein C584.03c (551 aa).

The RanBD1 domain occupies 1 to 309 (MDELLNVASH…LLLKYADDET (309 aa)). Ser-441 carries the phosphoserine modification. Residues 522 to 551 (SVIPHSEPESSSKVINCQAKLNVEKEKKNP) are disordered.

It is found in the nucleus. This chain is RanBD1 domain-containing protein C584.03c, found in Schizosaccharomyces pombe (strain 972 / ATCC 24843) (Fission yeast).